Here is a 497-residue protein sequence, read N- to C-terminus: Cytochrome P450 2D19 (497 aa).

Cys-443 lines the heme pocket.

The protein belongs to the cytochrome P450 family. Heme is required as a cofactor.

The protein resides in the endoplasmic reticulum membrane. It is found in the microsome membrane. The catalysed reaction is an organic molecule + reduced [NADPH--hemoprotein reductase] + O2 = an alcohol + oxidized [NADPH--hemoprotein reductase] + H2O + H(+). Responsible for the metabolism of many drugs and environmental chemicals that it oxidizes. The chain is Cytochrome P450 2D19 (CYP2D19) from Callithrix jacchus (White-tufted-ear marmoset).